A 389-amino-acid polypeptide reads, in one-letter code: MRDWKRLHATLDAAREGREMTVPEAAFLLGQTDPAARELVRSAADRLRAELVGERVSYVINRNINFSNICVQHCSFCAFRRDAQEAGAYSLDFAHILQKTAEAVASGATEICMQGGLNPAVRGAGGRVLDYYLQLVDAIKAPFPRIHLHAFSPQESFFIAREDRLPIETVLAELRAAGVDSMPGTAAEVLHEPVRRRLCPEKLSTLAWVRTVEAAHRTGLPMTSTMLSGHIETAMHRAIHLGVLRTIQKRTGGFTEFVLLPYVGLAAPRALRARVGRDQPELADALLTQAVARLFFGRSLVNHQPSWVKLGLEGAGEALRWGCNDIGGTLMEEHITSMAGARGGTCQTPEALRAAVFQAERTAYQRDTLYQEVAAESIQPAASLKSAAR.

One can recognise a Radical SAM core domain in the interval 56–298 (VSYVINRNIN…QAVARLFFGR (243 aa)). [4Fe-4S] cluster contacts are provided by cysteine 70, cysteine 74, and cysteine 77.

This sequence belongs to the radical SAM superfamily. CofH family. In terms of assembly, consists of two subunits, CofG and CofH. [4Fe-4S] cluster is required as a cofactor.

It carries out the reaction 5-amino-6-(D-ribitylamino)uracil + L-tyrosine + S-adenosyl-L-methionine = 5-amino-5-(4-hydroxybenzyl)-6-(D-ribitylimino)-5,6-dihydrouracil + 2-iminoacetate + 5'-deoxyadenosine + L-methionine + H(+). The protein operates within cofactor biosynthesis; coenzyme F0 biosynthesis. Functionally, catalyzes the radical-mediated synthesis of 5-amino-5-(4-hydroxybenzyl)-6-(D-ribitylimino)-5,6-dihydrouracil from 5-amino-6-(D-ribitylamino)uracil and L-tyrosine. The protein is 5-amino-6-(D-ribitylamino)uracil--L-tyrosine 4-hydroxyphenyl transferase of Gloeobacter violaceus (strain ATCC 29082 / PCC 7421).